The primary structure comprises 489 residues: MTTEQPTARLQRVDSQPENPFSALIEDQSIVIIPTFTLESGVTLYNVPVAYTTRGTLSPSGDNALVICHALSGSADVADWWGPLLGGPGQAFDISRFFVVCLNSLGSPYGSASAVTYKDGNPEKGLYGPEFPLTTVRDDVRIHKMVLDDLGIKQIAAVVGGSMGGMLTLEYAYFGKDYVRAIVPIATSARHSAWCISWGEAQRQSIYSDPKYENGYYSFDEPPAAGLGAARMSALLTYRSRNSFESRFGRNVPDPSKRQNINGTERLPTPPNEHWAIHNDGHKGNWSGRNSPAPEKPAEKTEVQYMDPQFSGTKTFSKSVSTTDGNAQKRPATYFSAQSYLRYQGDKFVKRFDANCYIAITRKLDTHDVSRHRARPDSENPVREALSQIQQPALVLGIESDGLFTFEEQKEIAEGIPDSRLKRIDSPEGHDAFLLQFEQVNQYILEFFREVLPDIMSKTPTDGAAIDGVGKLTKSSTFGEAEVEDITAW.

One can recognise an AB hydrolase-1 domain in the interval 63-435; the sequence is NALVICHALS…SPEGHDAFLL (373 aa). Ser162 is an active-site residue. The active-site Nucleophile is Ser162. The interval 247–272 is disordered; the sequence is RFGRNVPDPSKRQNINGTERLPTPPN. Active-site residues include Asp401 and His430.

It belongs to the AB hydrolase superfamily. MetX family.

It carries out the reaction L-homoserine + acetyl-CoA = O-acetyl-L-homoserine + CoA. It participates in amino-acid biosynthesis; L-methionine biosynthesis via de novo pathway; O-acetyl-L-homoserine from L-homoserine: step 1/1. Commits homoserine to the methionine biosynthesis pathway by catalyzing its O-acetylation. The protein is Homoserine O-acetyltransferase (metE) of Emericella nidulans (strain FGSC A4 / ATCC 38163 / CBS 112.46 / NRRL 194 / M139) (Aspergillus nidulans).